The sequence spans 451 residues: Cobyrinate a,c-diamide synthase (451 aa).

The GATase cobBQ-type domain maps to K246 to N437. C328 serves as the catalytic Nucleophile.

The protein belongs to the CobB/CbiA family. The cofactor is Mg(2+).

It catalyses the reaction cob(II)yrinate + 2 L-glutamine + 2 ATP + 2 H2O = cob(II)yrinate a,c diamide + 2 L-glutamate + 2 ADP + 2 phosphate + 2 H(+). The catalysed reaction is Ni-sirohydrochlorin + 2 L-glutamine + 2 ATP + 2 H2O = Ni-sirohydrochlorin a,c-diamide + 2 L-glutamate + 2 ADP + 2 phosphate + 2 H(+). The protein operates within cofactor biosynthesis; adenosylcobalamin biosynthesis; cob(II)yrinate a,c-diamide from sirohydrochlorin (anaerobic route): step 10/10. Functionally, catalyzes the ATP-dependent amidation of the two carboxylate groups at positions a and c of cobyrinate, using either L-glutamine or ammonia as the nitrogen source. Involved in the biosynthesis of the unique nickel-containing tetrapyrrole coenzyme F430, the prosthetic group of methyl-coenzyme M reductase (MCR), which plays a key role in methanogenesis and anaerobic methane oxidation. Catalyzes the ATP-dependent amidation of the two carboxylate groups at positions a and c of Ni-sirohydrochlorin, using L-glutamine or ammonia as the nitrogen source. The chain is Cobyrinate a,c-diamide synthase from Methanobrevibacter smithii (strain ATCC 35061 / DSM 861 / OCM 144 / PS).